A 231-amino-acid polypeptide reads, in one-letter code: Cytidylate kinase (231 aa).

Glycine 12 to threonine 20 provides a ligand contact to ATP.

The protein belongs to the cytidylate kinase family. Type 1 subfamily.

It localises to the cytoplasm. The catalysed reaction is CMP + ATP = CDP + ADP. It carries out the reaction dCMP + ATP = dCDP + ADP. The sequence is that of Cytidylate kinase from Shewanella amazonensis (strain ATCC BAA-1098 / SB2B).